A 207-amino-acid chain; its full sequence is Octanoyltransferase (207 aa).

The region spanning 27-203 (ADTEDELWVV…HLETQFTPKA (177 aa)) is the BPL/LPL catalytic domain. Substrate-binding positions include 66–73 (RGGQITYH), 133–135 (SLG), and 146–148 (GLA). C164 functions as the Acyl-thioester intermediate in the catalytic mechanism.

Belongs to the LipB family.

It localises to the cytoplasm. It carries out the reaction octanoyl-[ACP] + L-lysyl-[protein] = N(6)-octanoyl-L-lysyl-[protein] + holo-[ACP] + H(+). Its pathway is protein modification; protein lipoylation via endogenous pathway; protein N(6)-(lipoyl)lysine from octanoyl-[acyl-carrier-protein]: step 1/2. In terms of biological role, catalyzes the transfer of endogenously produced octanoic acid from octanoyl-acyl-carrier-protein onto the lipoyl domains of lipoate-dependent enzymes. Lipoyl-ACP can also act as a substrate although octanoyl-ACP is likely to be the physiological substrate. In Neisseria meningitidis serogroup A / serotype 4A (strain DSM 15465 / Z2491), this protein is Octanoyltransferase.